The following is a 128-amino-acid chain: Cytochrome c-type biogenesis protein CcmE (128 aa).

Topologically, residues 1–8 (MQKRVRNR) are cytoplasmic. Residues 9–29 (LITIIICFCSAFLGISIILYN) form a helical; Signal-anchor for type II membrane protein membrane-spanning segment. At 30–128 (LEKNIVFFLP…KHDENYRPPQ (99 aa)) the chain is on the periplasmic side. Heme-binding residues include His-120 and Tyr-124.

It belongs to the CcmE/CycJ family.

Its subcellular location is the cell inner membrane. Its function is as follows. Heme chaperone required for the biogenesis of c-type cytochromes. Transiently binds heme delivered by CcmC and transfers the heme to apo-cytochromes in a process facilitated by CcmF and CcmH. The sequence is that of Cytochrome c-type biogenesis protein CcmE from Rickettsia rickettsii (strain Iowa).